The following is a 239-amino-acid chain: MIFPAIDLRAGQSVRLYQGDFKQATLINPDPVVQAQQINAAGLQQLHMVDLDGAKSGRPENFATITAIRQAFTGTIELGGGIRTYELATRYLELGIDRLILGSVALTDPRLVKRLLSEFGGERIVIGLDGTNGYVAIKGWLEQSQTKMSTLMKTMTTSGAKHFIVTDVARDGTMQGPNLALYQELQAQVPTANLIASGGVRNLTDVQVLQASGFKDVIIGKALAEGGVTLAELAGVTEC.

Asp-7 (proton acceptor) is an active-site residue. The Proton donor role is filled by Asp-129.

It belongs to the HisA/HisF family.

Its subcellular location is the cytoplasm. It catalyses the reaction 1-(5-phospho-beta-D-ribosyl)-5-[(5-phospho-beta-D-ribosylamino)methylideneamino]imidazole-4-carboxamide = 5-[(5-phospho-1-deoxy-D-ribulos-1-ylimino)methylamino]-1-(5-phospho-beta-D-ribosyl)imidazole-4-carboxamide. It participates in amino-acid biosynthesis; L-histidine biosynthesis; L-histidine from 5-phospho-alpha-D-ribose 1-diphosphate: step 4/9. In Lactiplantibacillus plantarum (strain ATCC BAA-793 / NCIMB 8826 / WCFS1) (Lactobacillus plantarum), this protein is 1-(5-phosphoribosyl)-5-[(5-phosphoribosylamino)methylideneamino] imidazole-4-carboxamide isomerase.